The following is a 111-amino-acid chain: Nucleoid-associated protein PSEEN1789 (111 aa).

2 disordered regions span residues 1–25 and 89–111; these read MMKG…KMQE and NSQD…KMPF.

Belongs to the YbaB/EbfC family. As to quaternary structure, homodimer.

The protein resides in the cytoplasm. It localises to the nucleoid. Functionally, binds to DNA and alters its conformation. May be involved in regulation of gene expression, nucleoid organization and DNA protection. The sequence is that of Nucleoid-associated protein PSEEN1789 from Pseudomonas entomophila (strain L48).